The sequence spans 334 residues: Ferredoxin--NADP reductase (334 aa).

FAD is bound by residues Asp-33, Gln-41, Tyr-46, Ala-86, Phe-120, Asp-286, and Thr-327.

This sequence belongs to the ferredoxin--NADP reductase type 2 family. In terms of assembly, homodimer. FAD serves as cofactor.

The catalysed reaction is 2 reduced [2Fe-2S]-[ferredoxin] + NADP(+) + H(+) = 2 oxidized [2Fe-2S]-[ferredoxin] + NADPH. This Rickettsia akari (strain Hartford) protein is Ferredoxin--NADP reductase.